The primary structure comprises 248 residues: Tyrosine recombinase XerD-like (248 aa).

The Core-binding (CB) domain occupies 1–72 (MIAFIEPFLA…TVNQFLYYLY (72 aa)). Positions 92-248 (SLKPQLTRLD…PITLEKYYKM (157 aa)) constitute a Tyr recombinase domain. The active site involves Arg-213. Tyr-245 (O-(3'-phospho-DNA)-tyrosine intermediate) is an active-site residue.

This sequence belongs to the 'phage' integrase family. XerD-like subfamily.

The protein localises to the cytoplasm. Functionally, putative tyrosine recombinase. Not involved in the cutting and rejoining of the recombining DNA molecules on dif(SL) site. In Streptococcus equi subsp. zooepidemicus (strain H70), this protein is Tyrosine recombinase XerD-like.